The chain runs to 906 residues: Cadherin-2 (906 aa).

The signal sequence occupies residues 1–25 (MCRIAGALRTLLPLLAALLQASVEA). Positions 26–159 (SGEIALCKTG…HSGHLQRQKR (134 aa)) are excised as a propeptide. Residues S96 and S135 each carry the phosphoserine; by FAM20C modification. 5 consecutive Cadherin domains span residues 160 to 267 (DWVI…RPEF), 268 to 382 (LHQV…PPEF), 383 to 497 (TAMT…NPYF), 498 to 603 (APNP…DNAP), and 604 to 714 (QVLP…DVDR). Over 160-724 (DWVIPPINLP…IVGAGLGTGA (565 aa)) the chain is Extracellular. E170 is a binding site for Ca(2+). N-linked (GlcNAc...) asparagine glycosylation occurs at N190. Ca(2+)-binding residues include D226, E228, D259, M260, N261, D262, and N263. N-linked (GlcNAc...) asparagine glycosylation is present at N273. D293, D295, and N301 together coordinate Ca(2+). N325 carries N-linked (GlcNAc...) asparagine glycosylation. D353 provides a ligand contact to Ca(2+). N-linked (GlcNAc...) asparagine glycosylation is found at N402, N572, N651, and N692. A helical transmembrane segment spans residues 725–745 (IIAILLCIIILLILVLMFVVW). At 746 to 906 (MKRRDKERQA…LADMYGGGDD (161 aa)) the chain is on the cytoplasmic side. A compositionally biased stretch (low complexity) spans 863–880 (SGSTAGSLSSLNSSSSGG). The interval 863-884 (SGSTAGSLSSLNSSSSGGEQDY) is disordered.

As to quaternary structure, homodimer (via extracellular region). Can also form heterodimers with other cadherins (via extracellular region). Dimerization occurs in trans, i.e. with a cadherin chain from another cell. Interacts with CDCP1. Interacts with PCDH8; this complex may also include TAOK2. The interaction with PCDH8 may lead to internalization through TAOK2/p38 MAPK pathway. Identified in a complex containing FGFR4, NCAM1, CDH2, PLCG1, FRS2, SRC, SHC1, GAP43 and CTTN. May interact with OBSCN (via protein kinase domain 2). Interacts with FBXO45. Post-translationally, cleaved by MMP24. Ectodomain cleavage leads to the generation of a soluble 90 kDa N-terminal soluble fragment and a 45 kDa membrane-bound C-terminal fragment 1 (CTF1), which is further cleaved by gamma-secretase into a 35 kDa. Cleavage in neural stem cells by MMP24 affects CDH2-mediated anchorage of neural stem cells to ependymocytes in the adult subependymal zone, leading to modulate neural stem cell quiescence. May be phosphorylated by OBSCN.

The protein localises to the cell membrane. The protein resides in the sarcolemma. Its subcellular location is the cell junction. It is found in the cell surface. It localises to the desmosome. The protein localises to the adherens junction. Functionally, calcium-dependent cell adhesion protein; preferentially mediates homotypic cell-cell adhesion by dimerization with a CDH2 chain from another cell. Cadherins may thus contribute to the sorting of heterogeneous cell types. Acts as a regulator of neural stem cells quiescence by mediating anchorage of neural stem cells to ependymocytes in the adult subependymal zone: upon cleavage by MMP24, CDH2-mediated anchorage is affected, leading to modulate neural stem cell quiescence. Plays a role in cell-to-cell junction formation between pancreatic beta cells and neural crest stem (NCS) cells, promoting the formation of processes by NCS cells. Required for proper neurite branching. Required for pre- and postsynaptic organization. CDH2 may be involved in neuronal recognition mechanism. In hippocampal neurons, may regulate dendritic spine density. The polypeptide is Cadherin-2 (CDH2) (Homo sapiens (Human)).